A 297-amino-acid chain; its full sequence is Acetylglutamate kinase (297 aa).

Residues 64-65, Arg-86, and Asn-190 contribute to the substrate site; that span reads GG.

It belongs to the acetylglutamate kinase family. ArgB subfamily.

The protein localises to the cytoplasm. It catalyses the reaction N-acetyl-L-glutamate + ATP = N-acetyl-L-glutamyl 5-phosphate + ADP. Its pathway is amino-acid biosynthesis; L-arginine biosynthesis; N(2)-acetyl-L-ornithine from L-glutamate: step 2/4. Functionally, catalyzes the ATP-dependent phosphorylation of N-acetyl-L-glutamate. This chain is Acetylglutamate kinase, found in Solidesulfovibrio magneticus (strain ATCC 700980 / DSM 13731 / RS-1) (Desulfovibrio magneticus).